The primary structure comprises 162 residues: MVNTFDKTFEKRLINAFMRKGNYIKAERIYFTVLNRLTTLGIQNPYKFLRETLIKMTPIMGVVKKKRGVKEKIYPKYLEPRMGEKYAIKWLLKKLEKSKGDLLINNIVDEFLKASKDQGEVLKEKWALYKEVRYALSFNKAKKKKVSFIESKIKATKRRKWY.

The protein belongs to the universal ribosomal protein uS7 family. As to quaternary structure, part of the small ribosomal subunit.

Its subcellular location is the mitochondrion. Functionally, one of the primary rRNA binding proteins, it binds directly to 16S-like rRNA where it nucleates assembly of the head domain of the small subunit. This chain is Small ribosomal subunit protein uS7m (mrps7), found in Dictyostelium citrinum (Slime mold).